The chain runs to 262 residues: Small ribosomal subunit protein uS3 (262 aa).

Residues 39–107 (VREFLKKKLK…PVHVNIEEIR (69 aa)) form the KH type-2 domain. Residues 211–262 (NDAPVVEEPQEERRKRPGRPEGRRREGEGRPAGQRRGAGAGARRGTDAKTGE) are disordered. Basic and acidic residues predominate over residues 221-239 (EERRKRPGRPEGRRREGEG).

The protein belongs to the universal ribosomal protein uS3 family. In terms of assembly, part of the 30S ribosomal subunit. Forms a tight complex with proteins S10 and S14.

Functionally, binds the lower part of the 30S subunit head. Binds mRNA in the 70S ribosome, positioning it for translation. This is Small ribosomal subunit protein uS3 from Ralstonia pickettii (strain 12J).